The chain runs to 1282 residues: Indigoidine synthase (1282 aa).

An adenylation region spans residues alanine 24–leucine 379. Residues alanine 937 to valine 1012 enclose the Carrier domain. Position 972 is an O-(pantetheine 4'-phosphoryl)serine (serine 972). The segment at arginine 1030–glutamate 1138 is thioesterase.

This sequence belongs to the ATP-dependent AMP-binding enzyme family. Pantetheine 4'-phosphate serves as cofactor.

It carries out the reaction 2 FMN + 2 L-glutamine + 2 ATP + O2 = indigoidine + 2 FMNH2 + 2 AMP + 2 diphosphate + 2 H2O. It catalyses the reaction FMN + L-glutamine + ATP = 3-amino-1,5-dihydropyridine-2,6-dione + FMNH2 + AMP + diphosphate. The enzyme catalyses 2 3-amino-1,5-dihydropyridine-2,6-dione + O2 = indigoidine + 2 H2O. The protein operates within pigment biosynthesis. Its function is as follows. Nonribosomal peptide synthetase involved in the biosynthesis of the blue pigment indigoidine. Catalyzes the synthesis of the blue pigment using L-Gln as a substrate. Two glutamine molecules are cyclized and oxidized to form indigoidine. The chain is Indigoidine synthase from Streptomyces lavendulae.